We begin with the raw amino-acid sequence, 394 residues long: MAMEVGYLRHSTTITNGLCCNCDPKPRGARRVQTRLPGTLCLVKDTFTSSKAKLKKPSQREIFLTSRKRLNQIQAVSTAEKEREADKTSTPPIPSSIHDISNGDHILGFGADLTEDHPGYHDLEYKRRRSRIADLAKIHKIGEPIPCVDYTSEEIRVWGHVLDTLVDLYPTHACKEYLNCYELFNFKPNYIPQLQELSEVLERSTGWHIRPVAGLLHPRDFLNGLAFRTFHSTQYVRHGSNPMYTPEPDICHEVLGHVPILADPEFADLAWAIGQASLGASEKDIWHLTKLYWYTVEFGTVKEGNEIKAFGAGLLSSFGELKHMRVGTDGFMPEFVELDPFKKMPKMSYKDGYQKRYFLCESFADAAAKLRAYSRSILKPEVQSIKFGDTPIRL.

Residues 1–79 constitute a chloroplast transit peptide; that stretch reads MAMEVGYLRH…LNQIQAVSTA (79 aa). Residues 75–97 form a disordered region; it reads AVSTAEKEREADKTSTPPIPSSI. Residues His252, His257, and Glu297 each coordinate Fe cation.

It belongs to the biopterin-dependent aromatic amino acid hydroxylase family. Forms monomers. Fe(2+) serves as cofactor.

It is found in the plastid. Its subcellular location is the chloroplast. It carries out the reaction (6R)-L-erythro-5,6,7,8-tetrahydrobiopterin + L-phenylalanine + O2 = (4aS,6R)-4a-hydroxy-L-erythro-5,6,7,8-tetrahydrobiopterin + L-tyrosine. Catalyzes the hydroxylation of L-phenylalanine to L-tyrosine. Does not seem to be tetrahydropterin-dependent and shows preference for 10-formyltetrahydrofolate as cosubstrate and electron donor. This is Phenylalanine 4-monooxygenase, chloroplastic from Physcomitrium patens (Spreading-leaved earth moss).